A 1035-amino-acid polypeptide reads, in one-letter code: FACT complex subunit SPT16 (1035 aa).

The interval Glu-440–Arg-471 is disordered. Residues Leu-637–Gln-657 adopt a coiled-coil conformation. Residues Gly-944–Arg-1035 form a disordered region. Composition is skewed to acidic residues over residues Asp-949 to Ser-985 and Leu-993 to Glu-1002. Residues Leu-1003–Lys-1027 show a composition bias toward basic and acidic residues.

This sequence belongs to the peptidase M24 family. SPT16 subfamily. In terms of assembly, forms a stable heterodimer with POB3. The SPT16-POB3 dimer weakly associates with multiple molecules of NHP6 to form the FACT complex.

The protein resides in the nucleus. Its subcellular location is the chromosome. In terms of biological role, component of the FACT complex, a general chromatin factor that acts to reorganize nucleosomes. The FACT complex is involved in multiple processes that require DNA as a template such as mRNA elongation, DNA replication and DNA repair. During transcription elongation the FACT complex acts as a histone chaperone that both destabilizes and restores nucleosomal structure. It facilitates the passage of RNA polymerase II and transcription by promoting the dissociation of one histone H2A-H2B dimer from the nucleosome, then subsequently promotes the reestablishment of the nucleosome following the passage of RNA polymerase II. The polypeptide is FACT complex subunit SPT16 (SPT16) (Cryptococcus neoformans var. neoformans serotype D (strain B-3501A) (Filobasidiella neoformans)).